The sequence spans 353 residues: ATP-dependent kinase YFH7 (353 aa).

31 to 39 (GSPGSGKST) is an ATP binding site.

This sequence belongs to the YFH7 family.

ATP-dependent kinase that could be involved in endoplasmic reticulum membrane assembly. This Saccharomyces cerevisiae (strain JAY291) (Baker's yeast) protein is ATP-dependent kinase YFH7 (YFH7).